Here is a 1183-residue protein sequence, read N- to C-terminus: Putative ATP-dependent RNA helicase PB1A10.06c (1183 aa).

2 disordered regions span residues 1–92 and 165–315; these read MGRL…KKRL and ETTT…RASR. Over residues 60–81 the composition is skewed to basic and acidic residues; it reads VPKEERQKRKQELKDQLLKENE. Composition is skewed to low complexity over residues 165–176 and 184–196; these read ETTTTKSSTAET and TRSGFGFGFSTGT. The span at 224–251 shows a compositional bias: acidic residues; the sequence is EDPEYDSAEEDYLSTDSEEFSEDSDNSS. Basic and acidic residues predominate over residues 252 to 270; the sequence is EENKDTNEPSTKDAEKTVP. Over residues 292–308 the composition is skewed to acidic residues; that stretch reads ENEDFDLETSEDDSSDD. In terms of domain architecture, Helicase ATP-binding spans 408–585; sequence MEQIFANDVV…KLLFSVPPPI (178 aa). 421–428 is a binding site for ATP; it reads GATGSGKT. The DEAH box motif lies at 522–525; it reads DEAH. In terms of domain architecture, Helicase C-terminal spans 611–831; sequence AFDKVCLIHK…SIVLQMKNMN (221 aa). Positions 673–683 are enriched in acidic residues; it reads EDLQSETEDID. The tract at residues 673-696 is disordered; it reads EDLQSETEDIDQVPTSSSSSVTYD.

The protein belongs to the DEAD box helicase family. DEAH subfamily.

It localises to the nucleus. The protein resides in the nucleolus. It carries out the reaction ATP + H2O = ADP + phosphate + H(+). This is Putative ATP-dependent RNA helicase PB1A10.06c from Schizosaccharomyces pombe (strain 972 / ATCC 24843) (Fission yeast).